A 35-amino-acid polypeptide reads, in one-letter code: Kappa-theraphotoxin-Tb1c (35 aa).

3 disulfide bridges follow: cysteine 3/cysteine 18, cysteine 10/cysteine 23, and cysteine 17/cysteine 30.

Belongs to the neurotoxin 10 (Hwtx-1) family. 59 (Tltx) subfamily. As to quaternary structure, monomer. Expressed by the venom gland.

It localises to the secreted. Blocks Kv4.2/KCND2 voltage-gated potassium channels probably by shifting the voltage-dependence of channel activation to more depolarized potentials and by binding to the S3-S4 linker region of the voltage sensor domain. The protein is Kappa-theraphotoxin-Tb1c of Theraphosa blondi (Goliath birdeating spider).